A 500-amino-acid polypeptide reads, in one-letter code: Metal transporter Nramp3.1 (500 aa).

12 consecutive transmembrane segments (helical) span residues 51–71, 79–99, 128–148, 160–180, 188–208, 234–254, 280–300, 322–342, 370–390, 401–421, 439–459, and 467–487; these read LWLF…PGNL, AIAG…GLLV, MILW…EVIG, VLPL…FLFL, LEAA…WMFA, AVGV…SALV, AALA…AKGF, YGGG…AAGQ, ALIT…VFDT, WLNM…LCLV, VSWL…LDFF, and VFTT…IYLI.

It belongs to the NRAMP (TC 2.A.55) family. In terms of tissue distribution, expressed in roots, stems, buds and leaves.

It localises to the golgi apparatus. The protein localises to the trans-Golgi network membrane. The enzyme catalyses Mn(2+)(in) = Mn(2+)(out). It catalyses the reaction Fe(2+)(in) = Fe(2+)(out). Functionally, divalent metal transporter. Can transport manganese (Mn) and iron (Fe). Involved in the control of cell-to-cell transport of manganese (Mn) between organs and tissues to monitor Mn homeostasis. The sequence is that of Metal transporter Nramp3.1 from Populus trichocarpa (Western balsam poplar).